The sequence spans 92 residues: Large ribosomal subunit protein bL27 (92 aa).

Residues 1 to 10 (MLLQLQIQLF) constitute a propeptide that is removed on maturation.

The protein belongs to the bacterial ribosomal protein bL27 family. Post-translationally, the N-terminus is cleaved by ribosomal processing cysteine protease Prp.

The chain is Large ribosomal subunit protein bL27 from Aster yellows witches'-broom phytoplasma (strain AYWB).